We begin with the raw amino-acid sequence, 658 residues long: Threonine--tRNA ligase (658 aa).

The TGS domain maps to 1–64; it reads MSNTVSLQFP…GASGKVEIIT (64 aa). Residues 246–548 form a catalytic region; it reads DHRRLGREMD…LIENFAGHMP (303 aa). C343, H394, and H525 together coordinate Zn(2+).

The protein belongs to the class-II aminoacyl-tRNA synthetase family. In terms of assembly, homodimer. The cofactor is Zn(2+).

It localises to the cytoplasm. It carries out the reaction tRNA(Thr) + L-threonine + ATP = L-threonyl-tRNA(Thr) + AMP + diphosphate + H(+). Its function is as follows. Catalyzes the attachment of threonine to tRNA(Thr) in a two-step reaction: L-threonine is first activated by ATP to form Thr-AMP and then transferred to the acceptor end of tRNA(Thr). Also edits incorrectly charged L-seryl-tRNA(Thr). The protein is Threonine--tRNA ligase of Brucella melitensis biotype 1 (strain ATCC 23456 / CCUG 17765 / NCTC 10094 / 16M).